A 318-amino-acid chain; its full sequence is L-malyl-CoA/beta-methylmalyl-CoA lyase (318 aa).

4 residues coordinate substrate: F19, R24, K30, and R76. Residues E141 and D168 each coordinate Mg(2+). Substrate contacts are provided by residues 167-168 (AD) and 251-252 (IH).

This sequence belongs to the HpcH/HpaI aldolase family. Homohexamer. Dimer of trimers. Requires Mg(2+) as cofactor. Mn(2+) serves as cofactor.

The catalysed reaction is (S)-malyl-CoA = glyoxylate + acetyl-CoA. The enzyme catalyses (2R,3S)-beta-methylmalyl-CoA = propanoyl-CoA + glyoxylate. Involved in the ethylmalonyl-CoA pathway for acetate assimilation. Catalyzes the reversible condensation of glyoxylate and acetyl-CoA to L-malyl-CoA and the reversible condensation of glyoxylate and propionyl-CoA to yield beta-methylmalyl-CoA. The sequence is that of L-malyl-CoA/beta-methylmalyl-CoA lyase from Cereibacter sphaeroides (strain ATCC 17029 / ATH 2.4.9) (Rhodobacter sphaeroides).